The primary structure comprises 303 residues: 2-dehydropantoate 2-reductase (303 aa).

Residues 7-12 (GCGALG), N98, and A122 each bind NADP(+). N98 contributes to the substrate binding site. K176 functions as the Proton donor in the catalytic mechanism. 4 residues coordinate substrate: N180, N184, N194, and S244. E256 lines the NADP(+) pocket.

It belongs to the ketopantoate reductase family. In terms of assembly, monomer.

It is found in the cytoplasm. It catalyses the reaction (R)-pantoate + NADP(+) = 2-dehydropantoate + NADPH + H(+). The protein operates within cofactor biosynthesis; (R)-pantothenate biosynthesis; (R)-pantoate from 3-methyl-2-oxobutanoate: step 2/2. Functionally, catalyzes the NADPH-dependent reduction of ketopantoate into pantoic acid. Has a strong preference for NADPH over NADH as the electron acceptor. Pantoate, ketoisovalerate, oxaloacetate, pyruvate, 3-hydroxypyruvate, alpha-ketoglutarate, alpha-ketobutyrate, and acetaldehyde cannot serve as substrates for reduction. This Salmonella typhimurium (strain LT2 / SGSC1412 / ATCC 700720) protein is 2-dehydropantoate 2-reductase.